The following is a 612-amino-acid chain: Dihydroxy-acid dehydratase (612 aa).

Mg(2+) is bound at residue Asp-81. Cys-122 contributes to the [2Fe-2S] cluster binding site. The Mg(2+) site is built by Asp-123 and Lys-124. An N6-carboxylysine modification is found at Lys-124. Cys-195 is a [2Fe-2S] cluster binding site. Glu-491 is a binding site for Mg(2+). Ser-517 serves as the catalytic Proton acceptor.

It belongs to the IlvD/Edd family. In terms of assembly, homodimer. The cofactor is [2Fe-2S] cluster. Mg(2+) serves as cofactor.

It catalyses the reaction (2R)-2,3-dihydroxy-3-methylbutanoate = 3-methyl-2-oxobutanoate + H2O. The catalysed reaction is (2R,3R)-2,3-dihydroxy-3-methylpentanoate = (S)-3-methyl-2-oxopentanoate + H2O. It participates in amino-acid biosynthesis; L-isoleucine biosynthesis; L-isoleucine from 2-oxobutanoate: step 3/4. It functions in the pathway amino-acid biosynthesis; L-valine biosynthesis; L-valine from pyruvate: step 3/4. Functions in the biosynthesis of branched-chain amino acids. Catalyzes the dehydration of (2R,3R)-2,3-dihydroxy-3-methylpentanoate (2,3-dihydroxy-3-methylvalerate) into 2-oxo-3-methylpentanoate (2-oxo-3-methylvalerate) and of (2R)-2,3-dihydroxy-3-methylbutanoate (2,3-dihydroxyisovalerate) into 2-oxo-3-methylbutanoate (2-oxoisovalerate), the penultimate precursor to L-isoleucine and L-valine, respectively. This Rhizobium rhizogenes (strain K84 / ATCC BAA-868) (Agrobacterium radiobacter) protein is Dihydroxy-acid dehydratase.